The chain runs to 573 residues: Proton-coupled zinc antiporter SLC30A9, mitochondrial (573 aa).

Residues 66–108 (NCSTSGSGKDGSPTRPEEPKTTEKAQAAQPAAKGAGSKPQGLT) are disordered. Residues 90-104 (AQAAQPAAKGAGSKP) show a composition bias toward low complexity. The next 5 helical transmembrane spans lie at 244 to 264 (VVMVAICINGLNFFFKLLAWV), 319 to 339 (GVGIFMMGAGLSWYHGIMGLL), 347 to 367 (LLWAYCILAGSLVSEGATLLV), 397 to 417 (VVLLEDAAAVLGVVLAAGCMG), and 429 to 449 (SLGSLGVGTLLGTVSAFLIYT). Residues 467-471 (LTEFL) carry the LXXLL motif motif.

Belongs to the cation diffusion facilitator (CDF) transporter (TC 2.A.4) family. SLC30A subfamily.

The protein localises to the mitochondrion membrane. Its subcellular location is the nucleus. It localises to the endoplasmic reticulum. The enzyme catalyses Zn(2+)(in) + 2 H(+)(out) = Zn(2+)(out) + 2 H(+)(in). Functionally, mitochondrial proton-coupled zinc ion antiporter mediating the export of zinc from the mitochondria and involved in zinc homeostasis, zinc mobilization as well as mitochondrial morphology and health. In nucleus, may function as a secondary coactivator for nuclear receptors. This Danio rerio (Zebrafish) protein is Proton-coupled zinc antiporter SLC30A9, mitochondrial (slc30a9).